The primary structure comprises 99 residues: Nucleoid-associated protein Cj1642 (99 aa).

The protein belongs to the YbaB/EbfC family. In terms of assembly, homodimer.

It localises to the cytoplasm. The protein resides in the nucleoid. Binds to DNA and alters its conformation. May be involved in regulation of gene expression, nucleoid organization and DNA protection. The polypeptide is Nucleoid-associated protein Cj1642 (Campylobacter jejuni subsp. jejuni serotype O:2 (strain ATCC 700819 / NCTC 11168)).